A 556-amino-acid polypeptide reads, in one-letter code: Potassium-transporting ATPase potassium-binding subunit (556 aa).

10 consecutive transmembrane segments (helical) span residues 6–26 (AGLI…VPLG), 65–85 (GVLA…LVQG), 133–153 (GLAV…VALV), 176–196 (LRIL…GGAI), 249–269 (PTAW…FSLP), 283–303 (YAIA…MLWF), 378–398 (GLYG…LMVG), 419–439 (YFLV…ALPG), 483–503 (ALGL…LALA), and 526–546 (FVGM…LPML).

It belongs to the KdpA family. In terms of assembly, the system is composed of three essential subunits: KdpA, KdpB and KdpC.

Its subcellular location is the cell membrane. In terms of biological role, part of the high-affinity ATP-driven potassium transport (or Kdp) system, which catalyzes the hydrolysis of ATP coupled with the electrogenic transport of potassium into the cytoplasm. This subunit binds the extracellular potassium ions and delivers the ions to the membrane domain of KdpB through an intramembrane tunnel. This is Potassium-transporting ATPase potassium-binding subunit from Mycolicibacterium paratuberculosis (strain ATCC BAA-968 / K-10) (Mycobacterium paratuberculosis).